The primary structure comprises 356 residues: MKQKPIDDELKYLDERSRDIFRHIVEAYLNDGEPVGSRNLSRLLRQTLSPATIRNVMSDLEHLGLIYAPHVSAGRMPTQSGLRFFVDAFMEAGDLPNEERESIEAQVKEAGHAQSVEHFLVQASQILSDLSRGAGLVLASKYEGTLKHIEFVRLDGQQALAVLVTQQGEVENRIVHLPKGVTHAQLTEATNFLNAHIQGRTLSEAKEEIARLCSETRAALDHLSHHLVETGLALWGGEDADHKIHLIVRGRSNLLEDVKAEEDLERLRHLFDDLETRESMAQLLDLTDEGPGVRIFIGSENKLFSLSGSSLVVAPYRDSQQRVIGALGVIGPTRLNYARIVPMVNYTAQLVSQLLR.

Belongs to the HrcA family.

Its function is as follows. Negative regulator of class I heat shock genes (grpE-dnaK-dnaJ and groELS operons). Prevents heat-shock induction of these operons. The sequence is that of Heat-inducible transcription repressor HrcA from Bartonella quintana (strain Toulouse) (Rochalimaea quintana).